Consider the following 116-residue polypeptide: Nucleoid-associated protein EUBELI_02017 (116 aa).

Over residues 1-12 (MAKRGGFPGGMP) the composition is skewed to gly residues. Residues 1–42 (MAKRGGFPGGMPGNMNNLMKQAQRMQRQMEEQQAELENKEFS) form a disordered region. A compositionally biased stretch (low complexity) spans 13 to 26 (GNMNNLMKQAQRMQ).

The protein belongs to the YbaB/EbfC family. Homodimer.

It localises to the cytoplasm. The protein localises to the nucleoid. Its function is as follows. Binds to DNA and alters its conformation. May be involved in regulation of gene expression, nucleoid organization and DNA protection. The chain is Nucleoid-associated protein EUBELI_02017 from Lachnospira eligens (strain ATCC 27750 / DSM 3376 / VPI C15-48 / C15-B4) (Eubacterium eligens).